Here is a 330-residue protein sequence, read N- to C-terminus: tRNA U34 carboxymethyltransferase (330 aa).

Carboxy-S-adenosyl-L-methionine is bound by residues K91, W105, K110, G130, 152–154 (DPS), 181–182 (IE), M196, Y200, and R315.

Belongs to the class I-like SAM-binding methyltransferase superfamily. CmoB family. As to quaternary structure, homotetramer.

It catalyses the reaction carboxy-S-adenosyl-L-methionine + 5-hydroxyuridine(34) in tRNA = 5-carboxymethoxyuridine(34) in tRNA + S-adenosyl-L-homocysteine + H(+). Catalyzes carboxymethyl transfer from carboxy-S-adenosyl-L-methionine (Cx-SAM) to 5-hydroxyuridine (ho5U) to form 5-carboxymethoxyuridine (cmo5U) at position 34 in tRNAs. The polypeptide is tRNA U34 carboxymethyltransferase (Shewanella woodyi (strain ATCC 51908 / MS32)).